A 283-amino-acid chain; its full sequence is Lolitrem B biosynthesis cluster protein S (283 aa).

A signal peptide spans 1–27 (MSRSDWIFISLQGFFCLAGVIWKSREG). The next 5 membrane-spanning stretches (helical) occupy residues 73-93 (WFWL…LIIL), 112-132 (LGYL…SLWI), 157-177 (IFWC…VATL), 219-239 (MTGT…ALEA), and 250-270 (VRMF…DVLL).

Belongs to the ltmS family.

It is found in the membrane. Its function is as follows. Part of the gene cluster that mediates the biosynthesis of lolitrems, indole-diterpene mycotoxins that are potent tremorgens in mammals, and are synthesized by clavicipitaceous fungal endophytes in association with their grass hosts. The geranylgeranyl diphosphate (GGPP) synthase ltmG is proposed to catalyze the first step in lolitrem biosynthesis. LtmG catalyzes a series of iterative condensations of isopentenyl diphosphate (IPP) with dimethylallyl diphosphate (DMAPP), geranyl diphosphate (GPP), and farnesyl diphosphate (FPP), to form GGPP. GGPP then condenses with indole-3-glycerol phosphate to form 3-geranylgeranylindole, an acyclic intermediate, to be incorporated into paxilline. Either ltmG or ltmC could be responsible for this step, as both are putative prenyl transferases. The FAD-dependent monooxygenase ltmM then catalyzes the epoxidation of the two terminal alkenes of the geranylgeranyl moiety, which is subsequently cyclized by ltmB, to paspaline. The cytochrome P450 monooxygenases ltmQ and ltmP can sequentially oxidize paspaline to terpendole E and terpendole F. Alternatively, ltmP converts paspaline to an intermediate which is oxidized by ltmQ to terpendole F. LtmF, ltmK, ltmE and ltmJ appear to be unique to the epichloe endophytes. The prenyltransferase ltmF is involved in the 27-hydroxyl-O-prenylation. The cytochrome P450 monooxygenase ltmK is required for the oxidative acetal ring formation. The multi-functional prenyltransferase ltmE is required for C20- and C21-prenylations of the indole ring of paspalanes and acts together with the cytochrome P450 monooxygenase ltmJ to yield lolitremanes by multiple oxidations and ring closures. The stereoisomer pairs of lolitriol and lolitrem N or lolitrem B and lolitrem F may be attributed to variations in the way in which ring closure can occur under the action of ltmJ. While the major product of this pathway is lolitrem B, the prenyl transferases and cytochrome P450 monooxygenases identified in this pathway have a remarkable versatility in their regio- and stereo-specificities to generate a diverse range of metabolites that are products of a metabolic grid rather than a linear pathway. The polypeptide is Lolitrem B biosynthesis cluster protein S (Epichloe festucae (strain Fl1)).